Reading from the N-terminus, the 1333-residue chain is Inner capsid protein VP1 (1333 aa).

A compositionally biased stretch (polar residues) spans 1-10 (MHSTTNNSNK). Residues 1 to 93 (MHSTTNNSNK…MDMEKAAETT (93 aa)) are disordered. Residues 11–20 (RNNEEKHKQP) are compositionally biased toward basic and acidic residues. The segment covering 64–82 (DGASRSGTNAKVATASSAR) has biased composition (polar residues).

This sequence belongs to the turreted BTV-fold inner capsid family. In terms of assembly, homodecamer; each decamer is made up of two conformers of VP2, called VP2A and VP2B. 12 homodecamers assemble to form an icosahedral capsid.

It is found in the virion. Its function is as follows. Inner capsid protein that self-assembles to form an icosahedral capsid with a T=2 symmetry, which consists of 120 copies of VP2, with channels at each of its five-fold vertices. This capsid constitutes the innermost concentric layer of the viral mature particle. The sequence is that of Inner capsid protein VP1 (S1) from Lymantria dispar cypovirus 1 (isolate Rao) (LdCPV-1).